The following is a 401-amino-acid chain: Probable tRNA sulfurtransferase (401 aa).

Residues 63 to 168 (TTAEQALSYL…EREAFLYGAR (106 aa)) enclose the THUMP domain. ATP contacts are provided by residues 186-187 (LL), 211-212 (YF), R268, G290, and Q299.

The protein belongs to the ThiI family.

The protein resides in the cytoplasm. It catalyses the reaction [ThiI sulfur-carrier protein]-S-sulfanyl-L-cysteine + a uridine in tRNA + 2 reduced [2Fe-2S]-[ferredoxin] + ATP + H(+) = [ThiI sulfur-carrier protein]-L-cysteine + a 4-thiouridine in tRNA + 2 oxidized [2Fe-2S]-[ferredoxin] + AMP + diphosphate. The enzyme catalyses [ThiS sulfur-carrier protein]-C-terminal Gly-Gly-AMP + S-sulfanyl-L-cysteinyl-[cysteine desulfurase] + AH2 = [ThiS sulfur-carrier protein]-C-terminal-Gly-aminoethanethioate + L-cysteinyl-[cysteine desulfurase] + A + AMP + 2 H(+). Its pathway is cofactor biosynthesis; thiamine diphosphate biosynthesis. In terms of biological role, catalyzes the ATP-dependent transfer of a sulfur to tRNA to produce 4-thiouridine in position 8 of tRNAs, which functions as a near-UV photosensor. Also catalyzes the transfer of sulfur to the sulfur carrier protein ThiS, forming ThiS-thiocarboxylate. This is a step in the synthesis of thiazole, in the thiamine biosynthesis pathway. The sulfur is donated as persulfide by IscS. This Treponema pallidum (strain Nichols) protein is Probable tRNA sulfurtransferase.